The chain runs to 123 residues: uncharacterized protein (123 aa).

Positions 1-24 (MGGGGPPARVQGTEGSQTGGGAVA) are disordered.

This is an uncharacterized protein from Halorubrum pleomorphic virus 1 (HRPV-1).